A 212-amino-acid polypeptide reads, in one-letter code: MSTRIVVTGTDTGIGKTVFSAALAGALDGFYWKPIQAGLDDETDTQTVLRLSGLAAERVLPEAYRLRTPASPHLAAELDGVTIEHQALLVPEKDRPLVVEGAGGLLVPLTRTITYLDLMARWRIPVVLCARTALGTINHSLLSVEALRARGVAMLGIAFIGEENVESERIITEMGKVRRLGRLPHVAPLTRDTLREAFADGFAIDDFLKGPA.

13 to 18 (GIGKTV) contributes to the ATP binding site. Thr17 is a binding site for Mg(2+). Lys33 is an active-site residue. Residue Glu100 participates in Mg(2+) binding. ATP-binding positions include 100 to 103 (EGAG) and 184 to 186 (PHV).

This sequence belongs to the dethiobiotin synthetase family. In terms of assembly, homodimer. Requires Mg(2+) as cofactor.

It localises to the cytoplasm. The catalysed reaction is (7R,8S)-7,8-diammoniononanoate + CO2 + ATP = (4R,5S)-dethiobiotin + ADP + phosphate + 3 H(+). Its pathway is cofactor biosynthesis; biotin biosynthesis; biotin from 7,8-diaminononanoate: step 1/2. Catalyzes a mechanistically unusual reaction, the ATP-dependent insertion of CO2 between the N7 and N8 nitrogen atoms of 7,8-diaminopelargonic acid (DAPA, also called 7,8-diammoniononanoate) to form a ureido ring. The protein is ATP-dependent dethiobiotin synthetase BioD of Nitrobacter hamburgensis (strain DSM 10229 / NCIMB 13809 / X14).